A 276-amino-acid chain; its full sequence is ADP-dependent (S)-NAD(P)H-hydrate dehydratase (276 aa).

The YjeF C-terminal domain maps to 7-275; the sequence is TEEHVRATLP…DILPRVWKRF (269 aa). (6S)-NADPHX contacts are provided by Ala42, Gly104, and His149. AMP is bound by residues 186-190 and Gly215; that span reads KGNQT. Residue Asp216 coordinates (6S)-NADPHX.

This sequence belongs to the NnrD/CARKD family. As to quaternary structure, homotetramer. Mg(2+) is required as a cofactor.

It carries out the reaction (6S)-NADHX + ADP = AMP + phosphate + NADH + H(+). It catalyses the reaction (6S)-NADPHX + ADP = AMP + phosphate + NADPH + H(+). Catalyzes the dehydration of the S-form of NAD(P)HX at the expense of ADP, which is converted to AMP. Together with NAD(P)HX epimerase, which catalyzes the epimerization of the S- and R-forms, the enzyme allows the repair of both epimers of NAD(P)HX, a damaged form of NAD(P)H that is a result of enzymatic or heat-dependent hydration. In Bacillus subtilis (strain 168), this protein is ADP-dependent (S)-NAD(P)H-hydrate dehydratase.